A 125-amino-acid chain; its full sequence is Cardioactive peptide (125 aa).

Positions 1–22 (MTVSRVCLLLLVALVYLDCCYA) are cleaved as a signal peptide. Positions 23 to 42 (ASIPRNFDPRLSEEIVMAPK) are excised as a propeptide. Cys-47 and Cys-53 are oxidised to a cystine. Position 53 is a cysteine amide (Cys-53). Residues 57-125 (RSQGPPGMPA…RRKQKEAYIQ (69 aa)) constitute a propeptide that is removed on maturation.

Abdominal perivisceral organ; major neurohemal release site. Expressed in 116 neurons in post-embryonic central nervous system. Nine pairs of cells are observed in the brain, 4.5 pairs in the subesophageal ganglion, three pairs in each thoracic ganglion (T1-T3), three pairs in the first abdominal ganglion (A1), five pairs each in the second to sixth abdominal ganglia (A2-A6) and 7.5 pairs in the terminal ganglion. Expressed in every ganglion in each post-embryonic stage, except in the thoracic ganglia of first- and second-instar larvae. Colocalizes with CAP2b in median neurosecretory cells during the last larval instar through to adults.

Its subcellular location is the secreted. Functionally, cardioregulatory neurohormone that increases heart beat rate during adult wing inflation; has no effect on beat amplitude. The effect of CCAP is both ino- and chronotropic. The chain is Cardioactive peptide from Manduca sexta (Tobacco hawkmoth).